The sequence spans 492 residues: Nuclear autoantigenic sperm protein homolog (492 aa).

The segment covering methionine 1–alanine 14 has biased composition (low complexity). Disordered regions lie at residues methionine 1–arginine 52 and aspartate 123–valine 254. Residues threonine 32 and threonine 33 each carry the phosphothreonine modification. Positions valine 124–glutamate 145 are enriched in acidic residues. Composition is skewed to basic and acidic residues over residues glycine 147–glutamate 159 and lysine 170–serine 179. A phosphoserine mark is found at serine 179 and serine 184. Threonine 185 carries the post-translational modification Phosphothreonine. Position 193 is a phosphoserine (serine 193). A compositionally biased stretch (polar residues) spans serine 226 to asparagine 238. The span at valine 244–glycine 253 shows a compositional bias: acidic residues. TPR repeat units lie at residues alanine 284–leucine 317 and alanine 326–glutamate 359. Residues methionine 377 to glutamine 400 adopt a coiled-coil conformation. Residues serine 418 to alanine 459 show a composition bias toward low complexity. The segment at serine 418 to valine 492 is disordered. 2 positions are modified to phosphoserine: serine 478 and serine 485.

This sequence belongs to the NASP family. In terms of assembly, interacts with the histone H3-H4 heterodimer; the interaction with H4 is probably indirect and mediated by H3 (His3, His3.3A and His3.3B). Interacts with His2Av; this interaction directly or indirectly destabilizes His2Av.

Its subcellular location is the cytoplasm. The protein resides in the nucleus. It localises to the perinuclear region. Its function is as follows. Component of the histone chaperone network. Binds and stabilizes histone H3-H4 not bound to chromatin to maintain a soluble reservoir and modulate degradation by chaperone-mediated autophagy. May also bind and stabilize monomeric H3. Maternal effect gene essential for early embryogenesis. This Drosophila melanogaster (Fruit fly) protein is Nuclear autoantigenic sperm protein homolog.